We begin with the raw amino-acid sequence, 125 residues long: MPTKNQLIRHGREEKRRTDRTRALDQCPQKQGVCLRVSTRTPKKPNSALRKIAKVRLSNRHDIFAYIPGEGHNLQEHSIVLVRGGRVKDLPGVKFHCIRGVKDLLGIPDRRKGRSKYGAERPKSK.

Residues 1 to 27 form a disordered region; it reads MPTKNQLIRHGREEKRRTDRTRALDQC. The span at 10–23 shows a compositional bias: basic and acidic residues; it reads HGREEKRRTDRTRA.

It belongs to the universal ribosomal protein uS12 family.

Its subcellular location is the mitochondrion. Protein S12 is involved in the translation initiation step. The protein is Small ribosomal subunit protein uS12m (RPS12) of Triticum aestivum (Wheat).